The sequence spans 48 residues: Large ribosomal subunit protein bL34c (48 aa).

This sequence belongs to the bacterial ribosomal protein bL34 family.

It localises to the plastid. The protein resides in the chloroplast. This chain is Large ribosomal subunit protein bL34c, found in Thalassiosira pseudonana (Marine diatom).